The primary structure comprises 116 residues: MNLIMTILTITAALSLILATVSFWLPQMNPDAEKLSPYECGFDPLGSARLPFSLRFFLVAILFLLFDLEIALLLPLPWGDQLNNPTGTFFWATTVLILLTLGLIYEWTQGGLEWAE.

3 helical membrane passes run 3–23 (LIMT…TVSF), 56–76 (FFLV…LLPL), and 87–107 (GTFF…IYEW).

It belongs to the complex I subunit 3 family.

The protein localises to the mitochondrion membrane. The enzyme catalyses a ubiquinone + NADH + 5 H(+)(in) = a ubiquinol + NAD(+) + 4 H(+)(out). Core subunit of the mitochondrial membrane respiratory chain NADH dehydrogenase (Complex I) that is believed to belong to the minimal assembly required for catalysis. Complex I functions in the transfer of electrons from NADH to the respiratory chain. The immediate electron acceptor for the enzyme is believed to be ubiquinone. The chain is NADH-ubiquinone oxidoreductase chain 3 (MT-ND3) from Carassius auratus (Goldfish).